A 261-amino-acid polypeptide reads, in one-letter code: Proteasome assembly chaperone 2 (261 aa).

This sequence belongs to the PSMG2 family. As to quaternary structure, forms a heterodimer with psmg1. Post-translationally, degraded by the proteasome upon completion of 20S proteasome maturation.

The protein localises to the nucleus. Functionally, chaperone protein which promotes assembly of the 20S proteasome as part of a heterodimer with psmg1. The sequence is that of Proteasome assembly chaperone 2 from Xenopus tropicalis (Western clawed frog).